The following is a 184-amino-acid chain: Ribosome-recycling factor (184 aa).

Belongs to the RRF family.

It localises to the cytoplasm. Functionally, responsible for the release of ribosomes from messenger RNA at the termination of protein biosynthesis. May increase the efficiency of translation by recycling ribosomes from one round of translation to another. In Staphylococcus carnosus (strain TM300), this protein is Ribosome-recycling factor.